The following is a 436-amino-acid chain: EPS I polysaccharide export inner membrane protein EpsE (436 aa).

The next 12 helical transmembrane spans lie at 20-40, 49-69, 91-111, 133-153, 160-180, 185-205, 234-254, 261-281, 307-327, 341-361, 375-395, and 396-416; these read VLGL…NILL, FGLF…LATG, LCAF…ALYL, AAIV…QYAM, ATIS…MGPI, LALT…LLVL, VLTT…LAAM, LALF…PATL, ALLF…LLAG, AASS…SVLL, FAMA…ALRL, and GFGA…LILF.

The protein to E.coli bicyclomycin resistance protein (BCR).

Its subcellular location is the cell inner membrane. Functionally, probably involved in polymerization and/or export of exopolysaccharide EPS I which functions as a virulence factor. May play a role in export of EPS I or its intermediates across the membranes. The protein is EPS I polysaccharide export inner membrane protein EpsE (epsE) of Ralstonia solanacearum (Pseudomonas solanacearum).